We begin with the raw amino-acid sequence, 178 residues long: Gamma-crystallin S (178 aa).

Ser-2 carries the post-translational modification N-acetylserine. The interval 2–5 (SKTG) is N-terminal arm. 2 consecutive Beta/gamma crystallin 'Greek key' domains span residues 6-44 (GKIS…RVEG) and 45-87 (GTWA…RAVH). The interval 88–93 (LSSGGQ) is connecting peptide. Beta/gamma crystallin 'Greek key' domains are found at residues 94–134 (AKIQ…KVVE) and 135–177 (GTWI…RRIV).

The protein belongs to the beta/gamma-crystallin family. Monomer.

In terms of biological role, crystallins are the dominant structural components of the vertebrate eye lens. The sequence is that of Gamma-crystallin S (Crygs) from Mus musculus (Mouse).